We begin with the raw amino-acid sequence, 119 residues long: Ribonuclease P protein component (119 aa).

The protein belongs to the RnpA family. Consists of a catalytic RNA component (M1 or rnpB) and a protein subunit.

It carries out the reaction Endonucleolytic cleavage of RNA, removing 5'-extranucleotides from tRNA precursor.. RNaseP catalyzes the removal of the 5'-leader sequence from pre-tRNA to produce the mature 5'-terminus. It can also cleave other RNA substrates such as 4.5S RNA. The protein component plays an auxiliary but essential role in vivo by binding to the 5'-leader sequence and broadening the substrate specificity of the ribozyme. The sequence is that of Ribonuclease P protein component from Pasteurella multocida (strain Pm70).